Consider the following 398-residue polypeptide: Fructose-bisphosphate aldolase 2, chloroplastic (398 aa).

A chloroplast-targeting transit peptide spans 1 to 46; it reads MASTSLLKASPVLDKSEWVKGQSVLFRQPSSASVVLRNRATSLTVR. Position 95 (R95) interacts with substrate. Phosphoserine is present on S157. Residue K185 coordinates substrate. S215 bears the Phosphoserine mark. The active-site Proton acceptor is E225. The active-site Schiff-base intermediate with dihydroxyacetone-P is K267. 309–311 contributes to the substrate binding site; that stretch reads SGG. At K394 the chain carries N6,N6,N6-trimethyllysine.

The protein belongs to the class I fructose-bisphosphate aldolase family. As to quaternary structure, homotetramer. In terms of processing, can be trimethylated at Lys-394 by LSMT-L. The methylation level has no influence on the ologomerization state or on the kinetic properties of the enzyme. Phosphorylated on tyrosine residues in response to abscisic acid (ABA) in germinating seeds. In terms of tissue distribution, highly expressed in rosettes leaves.

It is found in the plastid. The protein localises to the chloroplast. The protein resides in the plastoglobule. It localises to the chloroplast stroma. It carries out the reaction beta-D-fructose 1,6-bisphosphate = D-glyceraldehyde 3-phosphate + dihydroxyacetone phosphate. It functions in the pathway carbohydrate degradation; glycolysis; D-glyceraldehyde 3-phosphate and glycerone phosphate from D-glucose: step 4/4. Plays a key role in glycolysis and gluconeogenesis. The polypeptide is Fructose-bisphosphate aldolase 2, chloroplastic (Arabidopsis thaliana (Mouse-ear cress)).